Here is a 415-residue protein sequence, read N- to C-terminus: MTELIKKGSAAKEAAQFLAQATTKQKNTALLNLSNDLLAHTSTLLKENEKDILRAQKKGTPETMIDRLRLTEDRMKEISEAVKQVVALKDPIGEVTNMWKNEAELTIGKTRVPLGVIGIIYESRPNVTVDASVLCFKTGNAVILRGGSDAIDSNKALMSVIQDSLEASGFPRSSVQLIEDTSRETARDMMRLNRFLDVLIPRGGARLIQTVLENATVPVIETGTGNCHIYVDKAAEKQMAIDILVNAKCSRPSVCNAAETLLIHRDVAEDYLPAMETALKEYDVELRADERAKEILQEAKAAKESDWEDEFLDFILAVKVVDSAEEAIEHINKYGTKHSEAIISNDYATGQAFHQKVDAAAVYINASTRFTDGFAMGFGAEIGISTQKLHARGPMGLTELTSTKYIIFGDGQIRN.

Belongs to the gamma-glutamyl phosphate reductase family.

The protein resides in the cytoplasm. It catalyses the reaction L-glutamate 5-semialdehyde + phosphate + NADP(+) = L-glutamyl 5-phosphate + NADPH + H(+). It functions in the pathway amino-acid biosynthesis; L-proline biosynthesis; L-glutamate 5-semialdehyde from L-glutamate: step 2/2. In terms of biological role, catalyzes the NADPH-dependent reduction of L-glutamate 5-phosphate into L-glutamate 5-semialdehyde and phosphate. The product spontaneously undergoes cyclization to form 1-pyrroline-5-carboxylate. In Listeria monocytogenes serotype 4a (strain HCC23), this protein is Gamma-glutamyl phosphate reductase.